The following is a 249-amino-acid chain: Hydroxyacylglutathione hydrolase (249 aa).

Histidine 53, histidine 55, aspartate 57, histidine 58, histidine 110, aspartate 127, and histidine 165 together coordinate Zn(2+).

Belongs to the metallo-beta-lactamase superfamily. Glyoxalase II family. In terms of assembly, monomer. It depends on Zn(2+) as a cofactor.

The enzyme catalyses an S-(2-hydroxyacyl)glutathione + H2O = a 2-hydroxy carboxylate + glutathione + H(+). The protein operates within secondary metabolite metabolism; methylglyoxal degradation; (R)-lactate from methylglyoxal: step 2/2. In terms of biological role, thiolesterase that catalyzes the hydrolysis of S-D-lactoyl-glutathione to form glutathione and D-lactic acid. This Buchnera aphidicola subsp. Baizongia pistaciae (strain Bp) protein is Hydroxyacylglutathione hydrolase.